Reading from the N-terminus, the 141-residue chain is Large ribosomal subunit protein uL11 (141 aa).

It belongs to the universal ribosomal protein uL11 family. As to quaternary structure, part of the ribosomal stalk of the 50S ribosomal subunit. Interacts with L10 and the large rRNA to form the base of the stalk. L10 forms an elongated spine to which L12 dimers bind in a sequential fashion forming a multimeric L10(L12)X complex. In terms of processing, one or more lysine residues are methylated.

Its function is as follows. Forms part of the ribosomal stalk which helps the ribosome interact with GTP-bound translation factors. The protein is Large ribosomal subunit protein uL11 of Roseiflexus sp. (strain RS-1).